Consider the following 255-residue polypeptide: UPF0246 protein Cphy_1568 (255 aa).

The protein belongs to the UPF0246 family.

In Lachnoclostridium phytofermentans (strain ATCC 700394 / DSM 18823 / ISDg) (Clostridium phytofermentans), this protein is UPF0246 protein Cphy_1568.